The primary structure comprises 427 residues: 3-phosphoshikimate 1-carboxyvinyltransferase (427 aa).

The 3-phosphoshikimate site is built by Lys22, Ser23, and Arg27. Position 22 (Lys22) interacts with phosphoenolpyruvate. Phosphoenolpyruvate contacts are provided by Gly96 and Arg124. 3-phosphoshikimate is bound by residues Ser169, Ser170, Gln171, Ser197, Asp313, Asn336, and Lys340. Gln171 contacts phosphoenolpyruvate. Catalysis depends on Asp313, which acts as the Proton acceptor. Residues Arg344, Arg386, and Lys411 each coordinate phosphoenolpyruvate.

Belongs to the EPSP synthase family. As to quaternary structure, monomer.

Its subcellular location is the cytoplasm. The catalysed reaction is 3-phosphoshikimate + phosphoenolpyruvate = 5-O-(1-carboxyvinyl)-3-phosphoshikimate + phosphate. It functions in the pathway metabolic intermediate biosynthesis; chorismate biosynthesis; chorismate from D-erythrose 4-phosphate and phosphoenolpyruvate: step 6/7. Functionally, catalyzes the transfer of the enolpyruvyl moiety of phosphoenolpyruvate (PEP) to the 5-hydroxyl of shikimate-3-phosphate (S3P) to produce enolpyruvyl shikimate-3-phosphate and inorganic phosphate. In Shigella flexneri serotype 5b (strain 8401), this protein is 3-phosphoshikimate 1-carboxyvinyltransferase.